We begin with the raw amino-acid sequence, 339 residues long: tRNA-dihydrouridine(20/20a) synthase (339 aa).

FMN-binding positions include 26-28 (PML) and Q78. Catalysis depends on C108, which acts as the Proton donor. FMN contacts are provided by residues K147, H180, 220–222 (NGG), and 242–243 (GR).

It belongs to the Dus family. DusA subfamily. FMN is required as a cofactor.

It catalyses the reaction 5,6-dihydrouridine(20) in tRNA + NADP(+) = uridine(20) in tRNA + NADPH + H(+). The catalysed reaction is 5,6-dihydrouridine(20) in tRNA + NAD(+) = uridine(20) in tRNA + NADH + H(+). It carries out the reaction 5,6-dihydrouridine(20a) in tRNA + NADP(+) = uridine(20a) in tRNA + NADPH + H(+). The enzyme catalyses 5,6-dihydrouridine(20a) in tRNA + NAD(+) = uridine(20a) in tRNA + NADH + H(+). Functionally, catalyzes the synthesis of 5,6-dihydrouridine (D), a modified base found in the D-loop of most tRNAs, via the reduction of the C5-C6 double bond in target uridines. Specifically modifies U20 and U20a in tRNAs. The sequence is that of tRNA-dihydrouridine(20/20a) synthase from Shigella flexneri.